We begin with the raw amino-acid sequence, 267 residues long: Thymidylate synthase (267 aa).

R24 provides a ligand contact to dUMP. H54 provides a ligand contact to (6R)-5,10-methylene-5,6,7,8-tetrahydrofolate. R129–R130 contacts dUMP. The Nucleophile role is filled by C149. Residues R169 to D172, N180, and H210 to Y212 each bind dUMP. (6R)-5,10-methylene-5,6,7,8-tetrahydrofolate is bound at residue D172. (6R)-5,10-methylene-5,6,7,8-tetrahydrofolate is bound at residue A266.

The protein belongs to the thymidylate synthase family. Bacterial-type ThyA subfamily. As to quaternary structure, homodimer.

It is found in the cytoplasm. The enzyme catalyses dUMP + (6R)-5,10-methylene-5,6,7,8-tetrahydrofolate = 7,8-dihydrofolate + dTMP. Its pathway is pyrimidine metabolism; dTTP biosynthesis. Functionally, catalyzes the reductive methylation of 2'-deoxyuridine-5'-monophosphate (dUMP) to 2'-deoxythymidine-5'-monophosphate (dTMP) while utilizing 5,10-methylenetetrahydrofolate (mTHF) as the methyl donor and reductant in the reaction, yielding dihydrofolate (DHF) as a by-product. This enzymatic reaction provides an intracellular de novo source of dTMP, an essential precursor for DNA biosynthesis. The polypeptide is Thymidylate synthase (Paenarthrobacter aurescens (strain TC1)).